We begin with the raw amino-acid sequence, 106 residues long: Met repressor (106 aa).

This sequence belongs to the MetJ family. In terms of assembly, homodimer.

It localises to the cytoplasm. Its function is as follows. This regulatory protein, when combined with SAM (S-adenosylmethionine) represses the expression of the methionine regulon and of enzymes involved in SAM synthesis. This Vibrio atlanticus (strain LGP32) (Vibrio splendidus (strain Mel32)) protein is Met repressor.